The primary structure comprises 175 residues: Large ribosomal subunit protein uL15 (175 aa).

The span at 1–13 shows a compositional bias: basic and acidic residues; sequence MTIKLNELRDNNG. 2 disordered regions span residues 1–44 and 150–175; these read MTIK…KARS and VELP…AKNA. Over residues 23–37 the composition is skewed to gly residues; it reads RGIGSGKGKTAGRGQ.

This sequence belongs to the universal ribosomal protein uL15 family. In terms of assembly, part of the 50S ribosomal subunit.

Binds to the 23S rRNA. The protein is Large ribosomal subunit protein uL15 of Sphingopyxis alaskensis (strain DSM 13593 / LMG 18877 / RB2256) (Sphingomonas alaskensis).